Reading from the N-terminus, the 142-residue chain is HTH-type transcriptional regulator LysM (142 aa).

One can recognise an HTH asnC-type domain in the interval 6-69; the sequence is IDESDLKILE…ELENEIRAIV (64 aa). The segment at residues 25-44 is a DNA-binding region (H-T-H motif); that stretch reads YTLIAKELKVSEAAIRKRIE.

As to quaternary structure, homotetramer.

It is found in the cytoplasm. It functions in the pathway amino-acid biosynthesis; L-lysine biosynthesis via AAA pathway [regulation]. In the absence or at low concentrations of lysine, activates the biosynthesis of this amino acid via the alpha-aminoadipate (AAA) pathway. The chain is HTH-type transcriptional regulator LysM (lysM) from Saccharolobus solfataricus (strain ATCC 35092 / DSM 1617 / JCM 11322 / P2) (Sulfolobus solfataricus).